The chain runs to 701 residues: Potassium-transporting ATPase ATP-binding subunit (701 aa).

A disordered region spans residues 1–28 (MNPDAPTPKNKSSRSRPSDRPQARKKAK). Helical transmembrane passes span 57–77 (MFLV…PNLF), 90–110 (GILT…EAVA), 245–265 (VLLA…PVFA), and 276–296 (ILVA…LSAI). Asp-329 serves as the catalytic 4-aspartylphosphate intermediate. Residues Asp-366, Glu-370, 397–404 (FSAKTRMS), and Lys-416 contribute to the ATP site. 2 residues coordinate Mg(2+): Asp-539 and Asp-543. The next 3 membrane-spanning stretches (helical) occupy residues 599–619 (FSLA…FASA), 635–655 (AVLS…PLAL), and 681–701 (VIAP…VGLA).

Belongs to the cation transport ATPase (P-type) (TC 3.A.3) family. Type IA subfamily. The system is composed of three essential subunits: KdpA, KdpB and KdpC.

Its subcellular location is the cell membrane. It catalyses the reaction K(+)(out) + ATP + H2O = K(+)(in) + ADP + phosphate + H(+). Its function is as follows. Part of the high-affinity ATP-driven potassium transport (or Kdp) system, which catalyzes the hydrolysis of ATP coupled with the electrogenic transport of potassium into the cytoplasm. This subunit is responsible for energy coupling to the transport system and for the release of the potassium ions to the cytoplasm. In Anabaena sp. (strain L31), this protein is Potassium-transporting ATPase ATP-binding subunit.